An 88-amino-acid polypeptide reads, in one-letter code: Small ribosomal subunit protein bS20 (88 aa).

It belongs to the bacterial ribosomal protein bS20 family.

Binds directly to 16S ribosomal RNA. In Syntrophomonas wolfei subsp. wolfei (strain DSM 2245B / Goettingen), this protein is Small ribosomal subunit protein bS20.